Here is a 491-residue protein sequence, read N- to C-terminus: Katanin p60 ATPase-containing subunit A1 (491 aa).

The interval 1-29 is interaction with KATNB1; it reads MSLQMIVENVKLAREYALLGNYDSAMVYY. The interaction with dynein and NDEL1 stretch occupies residues 1 to 75; sequence MSLQMIVENV…VKDIMKTLES (75 aa). The interval 1-185 is interaction with microtubules; sufficient for microtubule severing activity; the sequence is MSLQMIVENV…EPEANKFDGT (185 aa). S42 is modified (phosphoserine; by DYRK2). The tract at residues 101–182 is disordered; the sequence is PVPVERRPLP…AVTEPEANKF (82 aa). The segment covering 145 to 169 has biased composition (basic and acidic residues); sequence HNDRGKAVRSREKKEQSKGREEKNK. 249–256 is a binding site for ATP; sequence GPPGTGKT.

This sequence belongs to the AAA ATPase family. Katanin p60 subunit A1 subfamily. In terms of assembly, can homooligomerize into hexameric rings, which may be promoted by interaction with microtubules. Interacts with KATNB1, which may serve as a targeting subunit. Interacts with ASPM; the katanin complex formation KATNA1:KATNB1 is required for the association of ASPM. Interacts with dynein and NDEL1. Associates with the E3 ligase complex containing DYRK2, EDD/UBR5, DDB1 and DCAF1 proteins (EDVP complex). Interacts with KLHL42 (via the kelch domains). Interacts with CUL3; the interaction is enhanced by KLHL42. Interacts with KATNB1 and KATNBL1. Interacts with CAMSAP2 and CAMSAP3; leading to regulate the length of CAMSAP-decorated microtubule stretches. In terms of processing, phosphorylation by DYRK2 triggers ubiquitination and subsequent degradation. Post-translationally, ubiquitinated by the BCR(KLHL42) E3 ubiquitin ligase complex, leading to its proteasomal degradation. Ubiquitinated by the EDVP E3 ligase complex and subsequently targeted for proteasomal degradation.

The protein localises to the cytoplasm. It localises to the midbody. Its subcellular location is the cytoskeleton. The protein resides in the microtubule organizing center. It is found in the centrosome. The protein localises to the spindle pole. It localises to the spindle. It carries out the reaction n ATP + n H2O + a microtubule = n ADP + n phosphate + (n+1) alpha/beta tubulin heterodimers.. Its activity is regulated as follows. ATPase activity is stimulated by microtubules, which promote homooligomerization. ATP-dependent microtubule severing is stimulated by interaction with KATNB1. Its function is as follows. Catalytic subunit of a complex which severs microtubules in an ATP-dependent manner. Microtubule severing may promote rapid reorganization of cellular microtubule arrays and the release of microtubules from the centrosome following nucleation. Microtubule release from the mitotic spindle poles may allow depolymerization of the microtubule end proximal to the spindle pole, leading to poleward microtubule flux and poleward motion of chromosome. The function in regulating microtubule dynamics at spindle poles seems to depend on the association of the katanin KATNA1:KATNB1 complex with ASPM which recruits it to microtubules. Reversely KATNA1:KATNB1 can enhance ASPM blocking activity on microtubule minus-end growth. Microtubule release within the cell body of neurons may be required for their transport into neuronal processes by microtubule-dependent motor proteins. This transport is required for axonal growth. The sequence is that of Katanin p60 ATPase-containing subunit A1 (Katna1) from Mus musculus (Mouse).